We begin with the raw amino-acid sequence, 359 residues long: Chorismate synthase (359 aa).

NADP(+) contacts are provided by Arg48 and Arg54. FMN contacts are provided by residues 125-127 (RSS), 243-244 (NA), Gly283, 298-302 (KPTSS), and Arg324.

The protein belongs to the chorismate synthase family. Homotetramer. It depends on FMNH2 as a cofactor.

It catalyses the reaction 5-O-(1-carboxyvinyl)-3-phosphoshikimate = chorismate + phosphate. It functions in the pathway metabolic intermediate biosynthesis; chorismate biosynthesis; chorismate from D-erythrose 4-phosphate and phosphoenolpyruvate: step 7/7. In terms of biological role, catalyzes the anti-1,4-elimination of the C-3 phosphate and the C-6 proR hydrogen from 5-enolpyruvylshikimate-3-phosphate (EPSP) to yield chorismate, which is the branch point compound that serves as the starting substrate for the three terminal pathways of aromatic amino acid biosynthesis. This reaction introduces a second double bond into the aromatic ring system. In Mannheimia succiniciproducens (strain KCTC 0769BP / MBEL55E), this protein is Chorismate synthase.